Consider the following 634-residue polypeptide: Chaperone protein HtpG (634 aa).

The tract at residues Met-1 to Arg-342 is a; substrate-binding. The tract at residues Glu-343–Gln-559 is b. The interval Leu-560–Val-634 is c.

Belongs to the heat shock protein 90 family. In terms of assembly, homodimer.

The protein resides in the cytoplasm. Functionally, molecular chaperone. Has ATPase activity. This Xanthomonas euvesicatoria pv. vesicatoria (strain 85-10) (Xanthomonas campestris pv. vesicatoria) protein is Chaperone protein HtpG.